A 98-amino-acid chain; its full sequence is Putative membrane protein insertion efficiency factor (98 aa).

Belongs to the UPF0161 family.

The protein localises to the cell inner membrane. Its function is as follows. Could be involved in insertion of integral membrane proteins into the membrane. In Cupriavidus pinatubonensis (strain JMP 134 / LMG 1197) (Cupriavidus necator (strain JMP 134)), this protein is Putative membrane protein insertion efficiency factor.